The sequence spans 446 residues: Probable inactive lipase MT1628 (446 aa).

Belongs to the AB hydrolase superfamily. Lipase family.

The chain is Probable inactive lipase MT1628 from Mycobacterium tuberculosis (strain CDC 1551 / Oshkosh).